Consider the following 859-residue polypeptide: Cadherin-related family member 1 (859 aa).

A signal peptide spans 1 to 21; that stretch reads MRRGPQVALVLGLLCIYLAQA. Residues 22–701 lie on the Extracellular side of the membrane; that stretch reads NFAPHFFDNG…LIQTKDNPMK (680 aa). 6 consecutive Cadherin domains span residues 36–135, 136–247, 248–354, 360–473, 474–577, and 569–691; these read NGNM…APRF, LQEP…APIF, VGTP…PPTF, PQNK…VPKF, TSHY…YPQF, and DVND…MAAF. 2 N-linked (GlcNAc...) asparagine glycosylation sites follow: Asn-58 and Asn-89. Asn-288 and Asn-297 each carry an N-linked (GlcNAc...) asparagine glycan. Residues 702–722 traverse the membrane as a helical segment; the sequence is AVGVLAGVMAIVVAITVLIST. Topologically, residues 723–859 are cytoplasmic; the sequence is ATFWRNKKSN…KKSLGNKAYV (137 aa). Residues 789–859 are disordered; it reads PPRAPALPPP…KKSLGNKAYV (71 aa). The segment covering 790–800 has biased composition (pro residues); it reads PRAPALPPPPK. Residues 802–816 are compositionally biased toward polar residues; the sequence is ASSTVAQQTVPTVSG. Residues 817–827 show a composition bias toward low complexity; sequence SLTPQPSQQLP.

In terms of assembly, interacts with PROM1. Post-translationally, undergoes proteolytic cleavage; produces a soluble 95 kDa N-terminal fragment and a 25 kDa cell-associated C-terminal fragment. In terms of tissue distribution, expressed in the retina. Strongly expressed by the mitral and tufted cells in the main and accessory olfactory bulbs. Also expressed in the septum and olfactory cortex. Weakly expressed in the triangular septal nucleus and piriform cortex.

Its subcellular location is the cell membrane. Potential calcium-dependent cell-adhesion protein. May be required for the structural integrity of the outer segment (OS) of photoreceptor cells. The chain is Cadherin-related family member 1 (Cdhr1) from Rattus norvegicus (Rat).